The sequence spans 339 residues: Probable cytosolic iron-sulfur protein assembly protein CIAO1 (339 aa).

WD repeat units lie at residues 14 to 53 (HPDS…WICK), 59 to 98 (GHQR…FECV), 103 to 142 (GHEN…EYEC), 148 to 187 (SHTQ…WVCC), 192 to 231 (GHES…NEQG), 250 to 289 (FHSR…DPQQ), and 301 to 339 (AHSQ…PEGL). The short motif at 176 to 178 (LYR) is the LYR motif; required for interaction with HSC20 element.

The protein belongs to the WD repeat CIA1 family. In terms of assembly, component of the CIA complex. Interacts with CIAO2A and forms a complex with CIAO2B and MMS19; the interactions with CIAO2A and CIAO2B are mutually exclusive. Interacts with CHD1L, ERCC2, IREB2 and POLD1. Component of the MMXD complex, which includes CIAO1, ERCC2, CIAO2B, MMS19 and SLC25A5. Interacts with WT1. Interacts with CIAO3. Interacts (via LYR motif) with HSC20.

It is found in the cytoplasm. Its function is as follows. Key component of the cytosolic iron-sulfur protein assembly (CIA) complex, a multiprotein complex that mediates the incorporation of iron-sulfur cluster into extramitochondrial Fe/S proteins. As a CIA complex component, interacts specifically with CIAO2A or CIAO2B and MMS19 to assist different branches of iron-sulfur protein assembly, depending of its interactors. The complex CIAO1:CIAO2B:MMS19 binds to and facilitates the assembly of most cytosolic-nuclear Fe/S proteins. CIAO1:CIAO2A specifically matures ACO1 and stabilizes IREB2. Seems to specifically modulate the transactivation activity of WT1. As part of the mitotic spindle-associated MMXD complex it may play a role in chromosome segregation. This chain is Probable cytosolic iron-sulfur protein assembly protein CIAO1, found in Homo sapiens (Human).